A 293-amino-acid polypeptide reads, in one-letter code: MGFVPMAPLLADAKKDSYAIGQFNINGLQWAKAILAGAESQQSPVIAAASDRLIDYLGGFQTVVAMMGALTDELGITVPVVLHLDHGLSIERCKKAVDAGFSSVMFDGSHYPINENIDMTKEVVAYAHAHNVSVEGEVGTVGGMEDGLMAEIKYADVEECQRFVCETNVDALAAALGSVHGKYKGEPKLGFNEMAAISASTNVPLVLHGASGIPDEQLQRAIKLGHAKININTECMIAWSDACRTTFAEQETAFEPRLLLQEGLAMVQATVEKKIKQFGAANKAAGSASLQRR.

Asp85 (proton donor) is an active-site residue. Zn(2+) contacts are provided by His86 and His180. Gly181 is a binding site for dihydroxyacetone phosphate. His208 is a Zn(2+) binding site. Residues 209 to 211 (GAS) and 230 to 233 (NINT) each bind dihydroxyacetone phosphate. At Thr233 the chain carries Phosphothreonine.

The protein belongs to the class II fructose-bisphosphate aldolase family. IolJ subfamily. The cofactor is Zn(2+).

It catalyses the reaction 6-phospho-5-dehydro-2-deoxy-D-gluconate = 3-oxopropanoate + dihydroxyacetone phosphate. It functions in the pathway polyol metabolism; myo-inositol degradation into acetyl-CoA; acetyl-CoA from myo-inositol: step 6/7. Functionally, produces dihydroxyacetone phosphate (DHAP or glycerone phosphate) and malonic semialdehyde (MSA or 3-oxopropanoate) from 6-phospho-5-dehydro-2-deoxy-D-gluconate (DKGP). The protein is 6-phospho-5-dehydro-2-deoxy-D-gluconate aldolase (iolJ) of Shouchella clausii (strain KSM-K16) (Alkalihalobacillus clausii).